The chain runs to 95 residues: UPF0235 protein Ssed_1229 (95 aa).

The protein belongs to the UPF0235 family.

The polypeptide is UPF0235 protein Ssed_1229 (Shewanella sediminis (strain HAW-EB3)).